A 414-amino-acid chain; its full sequence is Serine--tRNA ligase (414 aa).

230–232 provides a ligand contact to L-serine; the sequence is TSE. 261 to 263 contacts ATP; the sequence is RQE. E284 contacts L-serine. 348 to 351 serves as a coordination point for ATP; sequence EISS. Position 382 (S382) interacts with L-serine.

This sequence belongs to the class-II aminoacyl-tRNA synthetase family. Type-1 seryl-tRNA synthetase subfamily. In terms of assembly, homodimer. The tRNA molecule binds across the dimer.

Its subcellular location is the cytoplasm. The catalysed reaction is tRNA(Ser) + L-serine + ATP = L-seryl-tRNA(Ser) + AMP + diphosphate + H(+). The enzyme catalyses tRNA(Sec) + L-serine + ATP = L-seryl-tRNA(Sec) + AMP + diphosphate + H(+). It participates in aminoacyl-tRNA biosynthesis; selenocysteinyl-tRNA(Sec) biosynthesis; L-seryl-tRNA(Sec) from L-serine and tRNA(Sec): step 1/1. Functionally, catalyzes the attachment of serine to tRNA(Ser). Is also able to aminoacylate tRNA(Sec) with serine, to form the misacylated tRNA L-seryl-tRNA(Sec), which will be further converted into selenocysteinyl-tRNA(Sec). The chain is Serine--tRNA ligase from Campylobacter fetus subsp. fetus (strain 82-40).